Reading from the N-terminus, the 253-residue chain is Ribosomal RNA small subunit methyltransferase J (253 aa).

Residues 98-99 (RD), 114-115 (ER), 150-151 (SS), and Asp172 contribute to the S-adenosyl-L-methionine site.

Belongs to the methyltransferase superfamily. RsmJ family.

It localises to the cytoplasm. The enzyme catalyses guanosine(1516) in 16S rRNA + S-adenosyl-L-methionine = N(2)-methylguanosine(1516) in 16S rRNA + S-adenosyl-L-homocysteine + H(+). In terms of biological role, specifically methylates the guanosine in position 1516 of 16S rRNA. In Shewanella pealeana (strain ATCC 700345 / ANG-SQ1), this protein is Ribosomal RNA small subunit methyltransferase J.